Reading from the N-terminus, the 446-residue chain is Chromosomal replication initiator protein DnaA (446 aa).

The segment at 1–92 (MENISDLWNS…SQAEEEIDLP (92 aa)) is domain I, interacts with DnaA modulators. Residues 87–107 (EEIDLPPSKPNSAQDDSNHLP) form a disordered region. A domain II region spans residues 93–109 (PSKPNSAQDDSNHLPQS). Positions 96 to 107 (PNSAQDDSNHLP) are enriched in polar residues. A domain III, AAA+ region region spans residues 110–326 (MLNPKYTFDT…GALIRVVAYS (217 aa)). ATP contacts are provided by Gly154, Gly156, Lys157, and Thr158. Positions 327-446 (SLINKDINAD…QVEEINDILK (120 aa)) are domain IV, binds dsDNA.

Belongs to the DnaA family. In terms of assembly, oligomerizes as a right-handed, spiral filament on DNA at oriC.

It is found in the cytoplasm. Functionally, plays an essential role in the initiation and regulation of chromosomal replication. ATP-DnaA binds to the origin of replication (oriC) to initiate formation of the DNA replication initiation complex once per cell cycle. Binds the DnaA box (a 9 base pair repeat at the origin) and separates the double-stranded (ds)DNA. Forms a right-handed helical filament on oriC DNA; dsDNA binds to the exterior of the filament while single-stranded (ss)DNA is stabiized in the filament's interior. The ATP-DnaA-oriC complex binds and stabilizes one strand of the AT-rich DNA unwinding element (DUE), permitting loading of DNA polymerase. After initiation quickly degrades to an ADP-DnaA complex that is not apt for DNA replication. Binds acidic phospholipids. This is Chromosomal replication initiator protein DnaA from Bacillus cereus (strain ATCC 10987 / NRS 248).